Here is a 219-residue protein sequence, read N- to C-terminus: Agamous-like MADS-box protein AGL19 (219 aa).

An MADS-box domain is found at 1 to 61; sequence MVRGKTEMKR…SKLYEFSSSS (61 aa). The interval 77–96 is disordered; the sequence is GNNHKRNDNSQQARDETSGL. Residues 86-176 form the K-box domain; that stretch reads SQQARDETSG…KEKWLGMGTA (91 aa).

As to quaternary structure, interacts with SOC1 and AGL21. As to expression, mostly expressed in the outer layers of the root meristem (lateral root cap and epidermis) and in the central cylinder cells of mature roots. Also present in rosette leaves and seedlings and, to a lesser extent, in cauline leaves and flowers. Enriched in apices including the shoot apical meristem and developing leaf primordia.

Its subcellular location is the nucleus. Its function is as follows. Probable transcription factor that promotes flowering, especially in response to vernalization by short periods of cold, in an FLC-inpedendent manner. This Arabidopsis thaliana (Mouse-ear cress) protein is Agamous-like MADS-box protein AGL19 (AGL19).